Consider the following 134-residue polypeptide: Global transcriptional regulator Spx (134 aa).

Cysteines 10 and 13 form a disulfide.

It belongs to the ArsC family. Spx subfamily. Interacts with the C-terminal domain of the alpha subunit of the RNAP.

The protein localises to the cytoplasm. In terms of biological role, global transcriptional regulator that plays a key role in stress response and exerts either positive or negative regulation of genes. Acts by interacting with the C-terminal domain of the alpha subunit of the RNA polymerase (RNAP). This interaction can enhance binding of RNAP to the promoter region of target genes and stimulate their transcription, or block interaction of RNAP with activator. This chain is Global transcriptional regulator Spx, found in Streptococcus pyogenes serotype M1.